We begin with the raw amino-acid sequence, 354 residues long: UPF0324 membrane protein BL1094 (354 aa).

The next 10 helical transmembrane spans lie at 12 to 33, 43 to 65, 86 to 108, 112 to 129, 138 to 160, 175 to 197, 239 to 256, 271 to 293, 300 to 321, and 331 to 353; these read IATV…FASW, FGAL…SAYV, LLRL…TQGI, PIAA…YAIA, LAIL…LAGS, VTMA…IALG, LSRV…AIWW, VAFP…VPFV, LVDF…NVNF, and PMLA…AMLF.

The protein belongs to the UPF0324 family.

The protein localises to the cell membrane. In Bifidobacterium longum (strain NCC 2705), this protein is UPF0324 membrane protein BL1094.